The sequence spans 62 residues: Large ribosomal subunit protein bL28 (62 aa).

The protein belongs to the bacterial ribosomal protein bL28 family.

This is Large ribosomal subunit protein bL28 from Caldanaerobacter subterraneus subsp. tengcongensis (strain DSM 15242 / JCM 11007 / NBRC 100824 / MB4) (Thermoanaerobacter tengcongensis).